We begin with the raw amino-acid sequence, 1231 residues long: Multifunctional 2-oxoglutarate metabolism enzyme (1231 aa).

A 2-oxoglutarate dehydrogenase E1, N-terminal part region spans residues 1–41 (MANISSPFGQNEWLVEAMYRKFRDDPSSVDPSWHEFLVDYS). The segment covering 24 to 37 (DDPSSVDPSWHEFL) has biased composition (basic and acidic residues). The disordered stretch occupies residues 24–56 (DDPSSVDPSWHEFLVDYSPEPTSQPAAEPTRVT). The linker stretch occupies residues 42–88 (PEPTSQPAAEPTRVTSPLVAERAAAAAPQAPPKPADTAAAGNGVVAA). The succinyltransferase E2 stretch occupies residues 89-337 (LAAKTAVPPP…LRTIHELLLS (249 aa)). The active-site Proton acceptor; for succinyltransferase activity is the His-316. The tract at residues 338-1231 (DGFWDEVFRE…QQEILDEAFG (894 aa)) is 2-oxoglutarate dehydrogenase E1, C-terminal part. Arg-542 is a thiamine diphosphate binding site. Residues His-581 and Ser-606 each coordinate 2-oxoglutarate. Thiamine diphosphate-binding residues include Ser-606, Leu-608, Asp-649, Ala-650, Ala-651, and Asn-682. Asp-649 is a Mg(2+) binding site. Positions 682 and 684 each coordinate Mg(2+). Positions 787-817 (DISMKEAEDALRDYQGQLERVFNEVRELEKH) form a coiled coil. His-1024 is a binding site for 2-oxoglutarate. Thr-1042, Arg-1058, Lys-1093, Ser-1096, Gln-1146, Arg-1153, and Arg-1154 together coordinate acetyl-CoA.

This sequence belongs to the 2-oxoacid dehydrogenase family. Kgd subfamily. In terms of assembly, homodimer. The 2-oxoglutarate dehydrogenase (ODH) complex contains multiple copies of three enzymatic components: 2-oxoglutarate dehydrogenase (E1), dihydrolipoamide succinyltransferase (E2) and lipoamide dehydrogenase (E3). Mg(2+) is required as a cofactor. It depends on thiamine diphosphate as a cofactor.

It carries out the reaction glyoxylate + 2-oxoglutarate + H(+) = 2-hydroxy-3-oxoadipate + CO2. The enzyme catalyses 2-oxoglutarate + H(+) = succinate semialdehyde + CO2. It catalyses the reaction N(6)-[(R)-lipoyl]-L-lysyl-[protein] + 2-oxoglutarate + H(+) = N(6)-[(R)-S(8)-succinyldihydrolipoyl]-L-lysyl-[protein] + CO2. The catalysed reaction is N(6)-[(R)-dihydrolipoyl]-L-lysyl-[protein] + succinyl-CoA = N(6)-[(R)-S(8)-succinyldihydrolipoyl]-L-lysyl-[protein] + CoA. Its pathway is carbohydrate metabolism; tricarboxylic acid cycle; succinate from 2-oxoglutarate (transferase route): step 1/2. It functions in the pathway carbohydrate metabolism; tricarboxylic acid cycle; succinyl-CoA from 2-oxoglutarate (dehydrogenase route): step 1/1. Alpha-ketoglutarate dehydrogenase and decarboxylase activities are inhibited by unphosphorylated GarA, and allosterically activated by acetyl-CoA, the main substrate of the TCA cycle. Functionally, shows three enzymatic activities that share a first common step, the attack of thiamine-PP on 2-oxoglutarate (alpha-ketoglutarate, KG), leading to the formation of an enamine-thiamine-PP intermediate upon decarboxylation. Thus, displays KGD activity, catalyzing the decarboxylation from five-carbon 2-oxoglutarate to four-carbon succinate semialdehyde (SSA). Also catalyzes C-C bond formation between the activated aldehyde formed after decarboxylation of alpha-ketoglutarate and the carbonyl of glyoxylate (GLX), to yield 2-hydroxy-3-oxoadipate (HOA), which spontaneously decarboxylates to form 5-hydroxylevulinate (HLA). And is also a component of the 2-oxoglutarate dehydrogenase (ODH) complex, that catalyzes the overall conversion of 2-oxoglutarate to succinyl-CoA and CO(2). The KG decarboxylase and KG dehydrogenase reactions provide two alternative, tightly regulated, pathways connecting the oxidative and reductive branches of the TCA cycle. This Mycobacterium bovis (strain ATCC BAA-935 / AF2122/97) protein is Multifunctional 2-oxoglutarate metabolism enzyme (kgd).